Reading from the N-terminus, the 81-residue chain is MALNIKDPSVHQAVKQIAKITGESQARAVATAVNERLARLRSDDLAARLLAIGHKTASRMSPEAKRLDHDALLYDERGLPA.

Functionally, antitoxin component of a type II toxin-antitoxin (TA) system. The sequence is that of Antitoxin VapB28 (vapB28) from Mycobacterium tuberculosis (strain CDC 1551 / Oshkosh).